The primary structure comprises 239 residues: Small ribosomal subunit protein uS3c (239 aa).

Residues 43–139 (IKNYIQKNRK…RFNISIEKVK (97 aa)) form the KH type-2 domain. Residues 50–74 (NRKKGSNRKIESDSSSEVITHNRKM) form a disordered region.

This sequence belongs to the universal ribosomal protein uS3 family. In terms of assembly, part of the 30S ribosomal subunit.

The protein localises to the plastid. The protein resides in the chloroplast. The sequence is that of Small ribosomal subunit protein uS3c (rps3) from Hordeum vulgare (Barley).